The chain runs to 463 residues: Fumarate hydratase class II (463 aa).

Substrate contacts are provided by residues 98–100, 129–132, 139–141, and Thr-187; these read SGT, HPND, and SSN. Residue His-188 is the Proton donor/acceptor of the active site. The active site involves Ser-318. Residues Ser-319 and 324 to 326 each bind substrate; that span reads KVN.

It belongs to the class-II fumarase/aspartase family. Fumarase subfamily. Homotetramer.

The protein localises to the cytoplasm. The enzyme catalyses (S)-malate = fumarate + H2O. The protein operates within carbohydrate metabolism; tricarboxylic acid cycle; (S)-malate from fumarate: step 1/1. Functionally, involved in the TCA cycle. Catalyzes the stereospecific interconversion of fumarate to L-malate. In Rickettsia bellii (strain RML369-C), this protein is Fumarate hydratase class II.